The sequence spans 266 residues: Glucosamine-6-phosphate deaminase (266 aa).

Residue D72 is the Proton acceptor; for enolization step of the active site. D141 acts as the For ring-opening step in catalysis. H143 serves as the catalytic Proton acceptor; for ring-opening step. E148 serves as the catalytic For ring-opening step.

This sequence belongs to the glucosamine/galactosamine-6-phosphate isomerase family. NagB subfamily. In terms of assembly, homohexamer.

The enzyme catalyses alpha-D-glucosamine 6-phosphate + H2O = beta-D-fructose 6-phosphate + NH4(+). It functions in the pathway amino-sugar metabolism; N-acetylneuraminate degradation; D-fructose 6-phosphate from N-acetylneuraminate: step 5/5. With respect to regulation, allosterically activated by N-acetylglucosamine 6-phosphate (GlcNAc6P). Catalyzes the reversible isomerization-deamination of glucosamine 6-phosphate (GlcN6P) to form fructose 6-phosphate (Fru6P) and ammonium ion. This Erwinia tasmaniensis (strain DSM 17950 / CFBP 7177 / CIP 109463 / NCPPB 4357 / Et1/99) protein is Glucosamine-6-phosphate deaminase.